Reading from the N-terminus, the 248-residue chain is Pulmonary surfactant-associated protein A (248 aa).

Residues 1-20 form the signal peptide; that stretch reads MSLCSLAFTLFLTVVAGIKC. The Collagen-like domain maps to 28–100; it reads GSPGIPGAPG…PGERGLPGFP (73 aa). 4-hydroxyproline occurs at positions 30, 33, 36, 42, 54, 57, 63, 67, 70, and 76. The interval 31–99 is disordered; the sequence is GIPGAPGNHG…EPGERGLPGF (69 aa). Basic and acidic residues predominate over residues 42-51; that stretch reads PGRDGRDGVK. A compositionally biased stretch (pro residues) spans 54 to 65; that stretch reads PGPPGPMGPPGG. Residues 69 to 82 show a composition bias toward low complexity; that stretch reads LPGRDGLPGAPGAP. A compositionally biased stretch (basic and acidic residues) spans 84–93; sequence ERGDKGEPGE. The C-type lectin domain maps to 133 to 248; it reads SVGDKVFSTN…LQYRLAVCEF (116 aa). 2 disulfides stabilise this stretch: Cys155–Cys246 and Cys224–Cys238. N-linked (GlcNAc...) asparagine glycosylation is present at Asn207. 4 residues coordinate Ca(2+): Glu215, Arg217, Asn234, and Asp235.

It belongs to the SFTPA family. As to quaternary structure, oligomeric complex of 6 set of homotrimers.

It localises to the secreted. The protein resides in the extracellular space. It is found in the extracellular matrix. Its subcellular location is the surface film. Functionally, in presence of calcium ions, it binds to surfactant phospholipids and contributes to lower the surface tension at the air-liquid interface in the alveoli of the mammalian lung and is essential for normal respiration. Enhances the expression of MYO18A/SP-R210 on alveolar macrophages. This Rattus norvegicus (Rat) protein is Pulmonary surfactant-associated protein A (Sftpa1).